A 238-amino-acid chain; its full sequence is 2,3,4,5-tetrahydropyridine-2,6-dicarboxylate N-acetyltransferase (238 aa).

Belongs to the transferase hexapeptide repeat family. DapH subfamily.

It carries out the reaction (S)-2,3,4,5-tetrahydrodipicolinate + acetyl-CoA + H2O = L-2-acetamido-6-oxoheptanedioate + CoA. Its pathway is amino-acid biosynthesis; L-lysine biosynthesis via DAP pathway; LL-2,6-diaminopimelate from (S)-tetrahydrodipicolinate (acetylase route): step 1/3. Catalyzes the transfer of an acetyl group from acetyl-CoA to tetrahydrodipicolinate. This Clostridioides difficile (strain 630) (Peptoclostridium difficile) protein is 2,3,4,5-tetrahydropyridine-2,6-dicarboxylate N-acetyltransferase.